The primary structure comprises 397 residues: Ubiquitin-like modifier-activating enzyme 5 (397 aa).

Residues Gly-76, Asp-97, Lys-120, Asn-143, and Asn-177 each contribute to the ATP site. The Zn(2+) site is built by Cys-219 and Cys-222. Catalysis depends on Cys-243, which acts as the Glycyl thioester intermediate. The Zn(2+) site is built by Cys-296 and Cys-301. A UFM1-interacting sequence (UIS) motif is present at residues 327–339 (IVHEDNDWGIELV). The segment at 340–370 (SETTEDELKAASGPVPDLPVGITVAYTIPNK) is linker. The UFC1-binding sequence (UFC) signature appears at 382–397 (ESEESLEDLMAKMRNL).

Belongs to the ubiquitin-activating E1 family. UBA5 subfamily. Homodimer; homodimerization is required for UFM1 activation. Interacts (via UIS motif) with UFM1; binds UFM1 via a trans-binding mechanism in which UFM1 interacts with distinct sites in both subunits of the UBA5 homodimer. Interacts (via C-terminus) with UFC1.

It localises to the cytoplasm. The protein resides in the nucleus. Its subcellular location is the endoplasmic reticulum membrane. It is found in the golgi apparatus. Functionally, E1-like enzyme which specifically catalyzes the first step in ufmylation. Activates UFM1 by first adenylating its C-terminal glycine residue with ATP, and thereafter linking this residue to the side chain of a cysteine residue in E1, yielding a UFM1-E1 thioester and free AMP. Activates UFM1 via a trans-binding mechanism, in which UFM1 interacts with distinct sites in both subunits of the UBA5 homodimer. Trans-binding also promotes stabilization of the UBA5 homodimer, and enhances ATP-binding. Transfer of UFM1 from UBA5 to the E2-like enzyme UFC1 also takes place using a trans mechanism. Ufmylation plays a key role in various processes, such as ribosome recycling, response to DNA damage, interferon response or reticulophagy (also called ER-phagy). This Gallus gallus (Chicken) protein is Ubiquitin-like modifier-activating enzyme 5.